Reading from the N-terminus, the 141-residue chain is MAMTVHCDIVSAEGEIFSGLVEMVIAHGALGDLGIALGHAPLITNLKPGPIRLIKQGGEAEVFYISGGFLEVQPNMVKVLADTVQRAADLDEAQAQAALKAAEAALHEKSADFDYGAASARLAEAAAQLRTVQQIRKKFGG.

This sequence belongs to the ATPase epsilon chain family. In terms of assembly, F-type ATPases have 2 components, CF(1) - the catalytic core - and CF(0) - the membrane proton channel. CF(1) has five subunits: alpha(3), beta(3), gamma(1), delta(1), epsilon(1). CF(0) has three main subunits: a, b and c.

The protein resides in the cell inner membrane. Its function is as follows. Produces ATP from ADP in the presence of a proton gradient across the membrane. This Pseudomonas fluorescens (strain Pf0-1) protein is ATP synthase epsilon chain.